A 135-amino-acid polypeptide reads, in one-letter code: MAGRGKAIGAGAAKKATSRSSKAGLQFPVGRIARFLKAGKYAERVGAGAPVYLAAVLEYLAAEVLELAGNAARDNKKTRIVPRHIQLAVRNDEELTKLLGGATIASGGVMPNIHQHLLPKKAGSSKASHADDDDN.

This sequence belongs to the histone H2A family. The nucleosome is a histone octamer containing two molecules each of H2A, H2B, H3 and H4 assembled in one H3-H4 heterotetramer and two H2A-H2B heterodimers. The octamer wraps approximately 147 bp of DNA.

The protein resides in the nucleus. The protein localises to the chromosome. Core component of nucleosome. Nucleosomes wrap and compact DNA into chromatin, limiting DNA accessibility to the cellular machineries which require DNA as a template. Histones thereby play a central role in transcription regulation, DNA repair, DNA replication and chromosomal stability. DNA accessibility is regulated via a complex set of post-translational modifications of histones, also called histone code, and nucleosome remodeling. In Oryza sativa subsp. indica (Rice), this protein is Probable histone H2A.7.